A 503-amino-acid polypeptide reads, in one-letter code: Probable cytosol aminopeptidase (503 aa).

Residues K274 and D279 each coordinate Mn(2+). K286 is a catalytic residue. D297, D356, and E358 together coordinate Mn(2+). The active site involves R360.

Belongs to the peptidase M17 family. Mn(2+) serves as cofactor.

It localises to the cytoplasm. It carries out the reaction Release of an N-terminal amino acid, Xaa-|-Yaa-, in which Xaa is preferably Leu, but may be other amino acids including Pro although not Arg or Lys, and Yaa may be Pro. Amino acid amides and methyl esters are also readily hydrolyzed, but rates on arylamides are exceedingly low.. It catalyses the reaction Release of an N-terminal amino acid, preferentially leucine, but not glutamic or aspartic acids.. Functionally, presumably involved in the processing and regular turnover of intracellular proteins. Catalyzes the removal of unsubstituted N-terminal amino acids from various peptides. The protein is Probable cytosol aminopeptidase of Burkholderia mallei (strain SAVP1).